The sequence spans 389 residues: Na(+)/H(+) antiporter NhaA 1 (389 aa).

11 helical membrane-spanning segments follow: residues 12–32 (VLNE…ALLV), 62–82 (FLLW…GLEL), 97–117 (IVLP…LFAL), 128–148 (GWAI…MMCG), 157–177 (IFLL…IAIF), 184–204 (IAAF…NLLG), 220–240 (ISVL…AFFI), 260–280 (FWIA…VNLS), 282–302 (IDIG…LFVG), 331–351 (LYGV…IDGL), and 365–385 (LAIL…LKFF).

Belongs to the NhaA Na(+)/H(+) (TC 2.A.33) antiporter family.

Its subcellular location is the cell inner membrane. It catalyses the reaction Na(+)(in) + 2 H(+)(out) = Na(+)(out) + 2 H(+)(in). In terms of biological role, na(+)/H(+) antiporter that extrudes sodium in exchange for external protons. This Campylobacter jejuni subsp. jejuni serotype O:2 (strain ATCC 700819 / NCTC 11168) protein is Na(+)/H(+) antiporter NhaA 1.